The following is a 263-amino-acid chain: Phosphatidylglycerol--prolipoprotein diacylglyceryl transferase (263 aa).

The next 4 helical transmembrane spans lie at 16-36, 55-75, 92-112, and 117-137; these read LAVS…WFYA, FVTY…ILLY, EGGM…YIFC, and LNFL…LFFG. R138 contacts a 1,2-diacyl-sn-glycero-3-phospho-(1'-sn-glycerol). The next 3 membrane-spanning stretches (helical) occupy residues 172–192, 201–221, and 234–254; these read QLYE…YAVF, GLNS…IEIF, and SLTM…YLII.

The protein belongs to the Lgt family.

The protein resides in the cell inner membrane. The catalysed reaction is L-cysteinyl-[prolipoprotein] + a 1,2-diacyl-sn-glycero-3-phospho-(1'-sn-glycerol) = an S-1,2-diacyl-sn-glyceryl-L-cysteinyl-[prolipoprotein] + sn-glycerol 1-phosphate + H(+). It participates in protein modification; lipoprotein biosynthesis (diacylglyceryl transfer). In terms of biological role, catalyzes the transfer of the diacylglyceryl group from phosphatidylglycerol to the sulfhydryl group of the N-terminal cysteine of a prolipoprotein, the first step in the formation of mature lipoproteins. This is Phosphatidylglycerol--prolipoprotein diacylglyceryl transferase from Rickettsia bellii (strain OSU 85-389).